The primary structure comprises 308 residues: Protein doublecortin (308 aa).

Residues 21–104 (ARVILFRNGD…AEPLNTEVIP (84 aa)) form the Doublecortin 1 domain. Positions 115–167 (EVSDQDDEPKPSKPFVSSVPPPPTPTPTSSSGTTTTSQPTLSASPSVSSAQSP) are disordered. Positions 141 to 167 (PTSSSGTTTTSQPTLSASPSVSSAQSP) are enriched in low complexity. Positions 194–277 (KVIMCFRNGD…GETLNPLDFS (84 aa)) constitute a Doublecortin 2 domain. The interval 282–308 (EHVKQKKLQEQQQQASEQQKPQEQEIF) is disordered. Residues 291-300 (EQQQQASEQQ) are compositionally biased toward low complexity.

As to quaternary structure, interacts with lis1.

The protein localises to the cytoplasm. It is found in the cytoskeleton. In terms of biological role, has a cytoskeleton-independent function in chemotactic signaling during development. The polypeptide is Protein doublecortin (dcx) (Dictyostelium discoideum (Social amoeba)).